The primary structure comprises 162 residues: Peroxiredoxin-2D (162 aa).

The Thioredoxin domain maps to 4–162 (ITVGDVVPDG…SSAEDILKAL (159 aa)). Residue Cys-51 is the Cysteine sulfenic acid (-SOH) intermediate of the active site.

Belongs to the peroxiredoxin family. Prx5 subfamily. As to quaternary structure, monomer. In terms of tissue distribution, exclusively expressed in buds and flowers. Also detected in pollen.

The protein resides in the cytoplasm. It catalyses the reaction [glutaredoxin]-dithiol + a hydroperoxide = [glutaredoxin]-disulfide + an alcohol + H2O. Thiol-specific peroxidase that catalyzes the reduction of hydrogen peroxide and organic hydroperoxides to water and alcohols, respectively. Plays a role in cell protection against oxidative stress by detoxifying peroxides. May be involved in intracellular redox signaling. This chain is Peroxiredoxin-2D (PRXIID), found in Arabidopsis thaliana (Mouse-ear cress).